The following is a 387-amino-acid chain: GTPase Obg (387 aa).

The region spanning 1-159 (MKFVDEAIIR…RSLKLELLLL (159 aa)) is the Obg domain. In terms of domain architecture, OBG-type G spans 160-333 (ADVGLLGMPN…LAVKLLDFIA (174 aa)). Residues 166-173 (GMPNAGKS), 191-195 (FTTLV), 213-216 (DIPG), 283-286 (NKAD), and 314-316 (SAY) each bind GTP. Mg(2+)-binding residues include serine 173 and threonine 193.

The protein belongs to the TRAFAC class OBG-HflX-like GTPase superfamily. OBG GTPase family. As to quaternary structure, monomer. Mg(2+) serves as cofactor.

It localises to the cytoplasm. Functionally, an essential GTPase which binds GTP, GDP and possibly (p)ppGpp with moderate affinity, with high nucleotide exchange rates and a fairly low GTP hydrolysis rate. Plays a role in control of the cell cycle, stress response, ribosome biogenesis and in those bacteria that undergo differentiation, in morphogenesis control. This is GTPase Obg from Shewanella halifaxensis (strain HAW-EB4).